The sequence spans 67 residues: Conotoxin Cl6.6a (67 aa).

Residues 1-24 (MKLTCVLIAAVLLLAVCQLDSADA) form the signal peptide. A propeptide spanning residues 25-37 (TGYMRKNPSLRSP) is cleaved from the precursor. 3 disulfide bridges follow: Cys43–Cys57, Cys50–Cys61, and Cys56–Cys65.

The protein belongs to the conotoxin O1 superfamily. Expressed by the venom duct.

The protein resides in the secreted. This Californiconus californicus (California cone) protein is Conotoxin Cl6.6a.